Consider the following 252-residue polypeptide: Phosphate import ATP-binding protein PstB (252 aa).

The ABC transporter domain occupies 6-247; that stretch reads IEVKNLNTYF…PKNKQTENYI (242 aa). 38 to 45 is an ATP binding site; it reads GPSGCGKS.

The protein belongs to the ABC transporter superfamily. Phosphate importer (TC 3.A.1.7) family. As to quaternary structure, the complex is composed of two ATP-binding proteins (PstB), two transmembrane proteins (PstC and PstA) and a solute-binding protein (PstS).

The protein resides in the cell membrane. It catalyses the reaction phosphate(out) + ATP + H2O = ADP + 2 phosphate(in) + H(+). In terms of biological role, part of the ABC transporter complex PstSACB involved in phosphate import. Responsible for energy coupling to the transport system. This chain is Phosphate import ATP-binding protein PstB, found in Methanosphaera stadtmanae (strain ATCC 43021 / DSM 3091 / JCM 11832 / MCB-3).